Consider the following 410-residue polypeptide: Peptidase T (410 aa).

His-78 lines the Zn(2+) pocket. Asp-80 is a catalytic residue. Asp-140 is a Zn(2+) binding site. Glu-174 (proton acceptor) is an active-site residue. Residues Glu-175, Asp-197, and His-379 each coordinate Zn(2+).

Belongs to the peptidase M20B family. Zn(2+) is required as a cofactor.

It localises to the cytoplasm. It catalyses the reaction Release of the N-terminal residue from a tripeptide.. Functionally, cleaves the N-terminal amino acid of tripeptides. The sequence is that of Peptidase T from Vibrio cholerae serotype O1 (strain ATCC 39315 / El Tor Inaba N16961).